Here is a 123-residue protein sequence, read N- to C-terminus: Large ribosomal subunit protein bL12 (123 aa).

Belongs to the bacterial ribosomal protein bL12 family. Homodimer. Part of the ribosomal stalk of the 50S ribosomal subunit. Forms a multimeric L10(L12)X complex, where L10 forms an elongated spine to which 2 to 4 L12 dimers bind in a sequential fashion. Binds GTP-bound translation factors.

In terms of biological role, forms part of the ribosomal stalk which helps the ribosome interact with GTP-bound translation factors. Is thus essential for accurate translation. The polypeptide is Large ribosomal subunit protein bL12 (Borrelia turicatae (strain 91E135)).